We begin with the raw amino-acid sequence, 606 residues long: Adenine deaminase (606 aa).

Belongs to the metallo-dependent hydrolases superfamily. Adenine deaminase family. The cofactor is Mn(2+).

It catalyses the reaction adenine + H2O + H(+) = hypoxanthine + NH4(+). This is Adenine deaminase from Rubrobacter xylanophilus (strain DSM 9941 / JCM 11954 / NBRC 16129 / PRD-1).